The chain runs to 188 residues: Ribosome hibernation promotion factor (188 aa).

Positions 93 to 125 are disordered; the sequence is KTRVNRKKRKESEHEPFPATPETPPETAVDHDK.

This sequence belongs to the HPF/YfiA ribosome-associated protein family. Long HPF subfamily. Interacts with 100S ribosomes.

It is found in the cytoplasm. Functionally, required for dimerization of active 70S ribosomes into 100S ribosomes in stationary phase; 100S ribosomes are translationally inactive and sometimes present during exponential growth. The protein is Ribosome hibernation promotion factor of Staphylococcus carnosus (strain TM300).